Consider the following 1337-residue polypeptide: Multidrug resistance protein fer6 (1337 aa).

An N-terminal signal peptide occupies residues 1–23; the sequence is MTPEASANWFSLCWFAWIDPILT. Residue N71 is glycosylated (N-linked (GlcNAc...) asparagine). A run of 2 helical transmembrane segments spans residues 94 to 114 and 138 to 158; these read FWIG…SPLL and LGSG…CVFL. The ABC transmembrane type-1 1 domain occupies 95 to 386; that stretch reads WIGGLLKLLA…LPIAWNAIVD (292 aa). The N-linked (GlcNAc...) asparagine glycan is linked to N187. The next 4 helical transmembrane spans lie at 220–242, 247–269, 331–351, and 359–379; these read FFHM…IWSL, LPGI…RLFA, ALAF…YALV, and ILFS…FLPI. Residues 417–667 enclose the ABC transporter 1 domain; sequence IQLEDASFTW…KGRVAELLLT (251 aa). The interval 432–460 is disordered; it reads ADTAKPVNEKKGQDSPSNEKETPVDRAST. Residues 438 to 455 show a composition bias toward basic and acidic residues; sequence VNEKKGQDSPSNEKETPV. N465 is a glycosylation site (N-linked (GlcNAc...) asparagine). Residue 478–485 participates in ATP binding; sequence GGVGSGKS. The tract at residues 699–751 is disordered; the sequence is GSASNRNSEASESTTTTVNAESKDTSNAEGVTNKTEKKDLVAPPAQAKSKALM. The span at 700 to 718 shows a compositional bias: low complexity; the sequence is SASNRNSEASESTTTTVNA. An N-linked (GlcNAc...) asparagine glycan is attached at N731. Transmembrane regions (helical) follow at residues 769–789, 817–837, 890–909, 915–933, 999–1019, and 1028–1048; these read YLNA…VLVF, GIYA…GVIF, AMRT…VLIA, FLIP…AAYY, LSVR…ILVV, and GETG…GWMI. Residues 781 to 1056 enclose the ABC transmembrane type-1 2 domain; that stretch reads LFLVAVLVFQ…MIRHAAELEN (276 aa). N-linked (GlcNAc...) asparagine glycosylation is present at N1057. The 229-residue stretch at 1097–1325 folds into the ABC transporter 2 domain; the sequence is IRFEGVEAKY…EKGAFRALCD (229 aa). 1131–1138 is an ATP binding site; it reads GRTGAGKS. N1227 carries an N-linked (GlcNAc...) asparagine glycan.

It belongs to the ABC transporter superfamily. ABCC family. Conjugate transporter (TC 3.A.1.208) subfamily.

Its subcellular location is the membrane. Its function is as follows. Multidrug resistance protein; part of the gene cluster that mediates the biosynthesis of siderophore ferrichrome A which is contributing to organismal virulence. The polypeptide is Multidrug resistance protein fer6 (Mycosarcoma maydis (Corn smut fungus)).